We begin with the raw amino-acid sequence, 1051 residues long: Anucleate primary sterigmata protein B (1051 aa).

2 coiled-coil regions span residues 10–200 (IDRL…YAIA) and 239–285 (STLV…ELKL). Basic and acidic residues predominate over residues 58 to 90 (KDNQGLKRKIRDLEKQLKDQQSDKESMLNHDPE). Disordered stretches follow at residues 58-100 (KDNQ…DRDH) and 141-160 (LKSL…REER). Residues 294 to 303 (AGDSILDRSA) are compositionally biased toward basic and acidic residues. Disordered stretches follow at residues 294–329 (AGDS…AERE), 877–902 (NHPR…LAER), 909–928 (NTAA…QMTN), and 984–1051 (EERD…DIEV). Over residues 309-321 (RPSSSISDRTGQS) the composition is skewed to polar residues. Coiled coils occupy residues 325 to 743 (DAER…RNSM) and 787 to 878 (RNLL…LQNH). Polar residues-rich tracts occupy residues 877-897 (NHPR…SSTI) and 916-928 (ARSS…QMTN). Positions 950-1004 (NQEVWIKRLHELERRLKAEREARLLDRNGARRRLEERDAENKRLRAQLDRQRLRQ) form a coiled coil. Composition is skewed to basic and acidic residues over residues 984–1001 (EERD…DRQR) and 1028–1040 (EGYR…HSSS).

The protein resides in the cytoplasm. Functionally, involved in regulation of nuclear migration. May be involved in regulating nuclear positioning. The chain is Anucleate primary sterigmata protein B (apsB) from Emericella nidulans (strain FGSC A4 / ATCC 38163 / CBS 112.46 / NRRL 194 / M139) (Aspergillus nidulans).